The chain runs to 356 residues: Peptide chain release factor 1 (356 aa).

N5-methylglutamine is present on glutamine 233.

This sequence belongs to the prokaryotic/mitochondrial release factor family. In terms of processing, methylated by PrmC. Methylation increases the termination efficiency of RF1.

It localises to the cytoplasm. In terms of biological role, peptide chain release factor 1 directs the termination of translation in response to the peptide chain termination codons UAG and UAA. The chain is Peptide chain release factor 1 from Halalkalibacterium halodurans (strain ATCC BAA-125 / DSM 18197 / FERM 7344 / JCM 9153 / C-125) (Bacillus halodurans).